The primary structure comprises 104 residues: Large ribosomal subunit protein bL21 (104 aa).

The protein belongs to the bacterial ribosomal protein bL21 family. As to quaternary structure, part of the 50S ribosomal subunit. Contacts protein L20.

This protein binds to 23S rRNA in the presence of protein L20. The protein is Large ribosomal subunit protein bL21 of Elusimicrobium minutum (strain Pei191).